Reading from the N-terminus, the 594-residue chain is Estrogen receptor (594 aa).

A modulating (transactivation AF-1); mediates interaction with MACROD1 region spans residues 1-184 (MTMTLHTKAS…AMESAKETRY (184 aa)). Ser-10 is a glycosylation site (O-linked (GlcNAc) serine). A required for interaction with NCOA1 region spans residues 35 to 47 (LERPLGEVYVESS). The interaction with DDX5; self-association stretch occupies residues 35-174 (LERPLGEVYV…LASSGDKGSM (140 aa)). A phosphoserine; by CDK2 mark is found at Ser-104 and Ser-106. Phosphoserine is present on Ser-118. The disordered stretch occupies residues 152–173 (PNADNRRQGGRERLASSGDKGS). The span at 154–165 (ADNRRQGGRERL) shows a compositional bias: basic and acidic residues. At Ser-167 the chain carries Phosphoserine; by CK2. 2 consecutive NR C4-type zinc fingers follow at residues 185–205 (CAVC…CEGC) and 221–245 (CPAT…LRKC). A DNA-binding region (nuclear receptor) is located at residues 185 to 250 (CAVCNDYASG…RLRKCYEVGM (66 aa)). The tract at residues 185–310 (CAVCNDYASG…TKKISPVLSL (126 aa)) is mediates interaction with DNTTIP2. The segment at 251-310 (MKGGIRKDRRGGRMLKHKRQRDDGEGRNEAGPSGDRRPANFWPSPLLIKHTKKISPVLSL) is hinge. The segment covering 257-269 (KDRRGGRMLKHKR) has biased composition (basic residues). Residues 257–293 (KDRRGGRMLKHKRQRDDGEGRNEAGPSGDRRPANFWP) form a disordered region. Arg-260 is subject to Asymmetric dimethylarginine; by PRMT1. An interaction with AKAP13 region spans residues 262-594 (GRMLKHKRQR…GEAEGFPNTI (333 aa)). Residues 264 to 594 (MLKHKRQRDD…GEAEGFPNTI (331 aa)) form a self-association region. Basic and acidic residues predominate over residues 270–288 (QRDDGEGRNEAGPSGDRRP). An NR LBD domain is found at 311-546 (TAEQMISALL…DLLLEMLDAH (236 aa)). The interval 311-594 (TAEQMISALL…GEAEGFPNTI (284 aa)) is transactivation AF-2. 17beta-estradiol is bound by residues Glu-353 and Arg-394. Residue Cys-447 is the site of S-palmitoyl cysteine attachment. His-523 contributes to the 17beta-estradiol binding site. Phosphotyrosine; by Tyr-kinases is present on Tyr-536. Residues 551–575 (PANHGGAPMEETNQSQLATTGSTSP) are disordered. The span at 561-575 (ETNQSQLATTGSTSP) shows a compositional bias: polar residues. An O-linked (GlcNAc) threonine glycan is attached at Thr-570.

This sequence belongs to the nuclear hormone receptor family. NR3 subfamily. Binds DNA as a homodimer. Can form a heterodimer with ESR2. Interacts with coactivator NCOA5. Interacts with PELP1, the interaction is enhanced by 17-beta-estradiol; the interaction increases ESR1 transcriptional activity. Interacts with NCOA7; the interaction is ligand-inducible. Interacts with AKAP13, CUEDC2, HEXIM1, KDM5A, MAP1S, SMARD1, and UBE1C. Interacts with MUC1; the interaction is stimulated by 7 beta-estradiol (E2) and enhances ESR1-mediated transcription. Interacts with DNTTIP2, and UIMC1. Interacts with KMT2D/MLL2. Interacts with ATAD2; the interaction is enhanced by estradiol. Interacts with KIF18A and LDB1. Interacts with RLIM (via its C-terminus). Interacts with MACROD1. Interacts with SH2D4A and PLCG. Interacts with SH2D4A; the interaction blocks binding to PLCG and inhibits estrogen-induced cell proliferation. Interacts with DYNLL1. Interacts with CCDC62; the interaction requires estradiol and appears to enhance the transcription of target genes. Interacts with NR2C1; the interaction prevents homodimerization of ESR1 and suppresses its transcriptional activity and cell growth. Interacts with DNAAF4. Interacts with PRMT2. Interacts with RBFOX2. Interacts with EP300; the interaction is estrogen-dependent and enhanced by CITED1. Interacts with CITED1; the interaction is estrogen-dependent. Interacts with FAM120B, FOXL2, PHB2 and SLC30A9. Interacts with coactivators NCOA3 and NCOA6. Interacts with STK3/MST2 only in the presence of SAV1 and vice-versa. Binds to CSNK1D. Interacts with NCOA2; NCOA2 can interact with ESR1 AF-1 and AF-2 domains simultaneously and mediate their transcriptional synergy. Interacts with DDX5. Interacts with NCOA1; the interaction seems to require a self-association of N-terminal and C-terminal regions. Interacts with ZNF366, DDX17, NFKB1, RELA, SP1 and SP3. Interacts with NRIP1. Interacts with GPER1; the interaction occurs in an estrogen-dependent manner. Interacts with CLOCK and the interaction is stimulated by estrogen. Interacts with TRIP4 (ufmylated); estrogen dependent. Interacts with LMTK3; the interaction phosphorylates ESR1 (in vitro) and protects it against proteasomal degradation. Interacts with CCAR2 (via N-terminus) in a ligand-independent manner. Interacts with ZFHX3. Interacts with SFR1 in a ligand-dependent and -independent manner. Interacts with DCAF13, LATS1 and DCAF1; regulates ESR1 ubiquitination and ubiquitin-mediated proteasomal degradation. Interacts (via DNA-binding domain) with POU4F2 (C-terminus); this interaction increases the estrogen receptor ESR1 transcriptional activity in a DNA- and ligand 17-beta-estradiol-independent manner. Interacts with ESRRB isoform 1. Interacts with UBE3A and WBP2. Interacts with GTF2B. Interacts with RBM39. In the absence of hormonal ligand, interacts with TACC1. Interacts with PI3KR1 or PI3KR2 and PTK2/FAK1. Interacts with SRC. Interacts with BAG1; the interaction is promoted in the absence of estradiol (17-beta-estradiol/E2). Interacts with and ubiquitinated by STUB1; the interaction is promoted in the absence of estradiol (17-beta-estradiol/E2). Interacts with NEDD8. In terms of processing, ubiquitinated; regulated by LATS1 via DCAF1 it leads to ESR1 proteasomal degradation. Deubiquitinated by OTUB1. Ubiquitinated by STUB1/CHIP; in the CA1 hippocampal region following loss of endogenous circulating estradiol (17-beta-estradiol/E2). Ubiquitinated by UBR5, leading to its degradation: UBR5 specifically recognizes and binds ligand-bound ESR1 when it is not associated with coactivators (NCOAs). In presence of NCOAs, the UBR5-degron is not accessible, preventing its ubiquitination and degradation. Phosphorylated by cyclin A/CDK2 and CK1. Phosphorylation probably enhances transcriptional activity. Dephosphorylation at Ser-118 by PPP5C inhibits its transactivation activity. Phosphorylated by LMTK3 (in vitro). Post-translationally, palmitoylated at Cys-447 by ZDHHC7 and ZDHHC21. Palmitoylation is required for plasma membrane targeting and for rapid intracellular signaling via ERK and AKT kinases and cAMP generation, but not for signaling mediated by the nuclear hormone receptor. In terms of processing, dimethylated by PRMT1 at Arg-260. The methylation may favor cytoplasmic localization. Demethylated by JMJD6 at Arg-260.

Its subcellular location is the nucleus. It localises to the cytoplasm. The protein localises to the golgi apparatus. The protein resides in the cell membrane. Nuclear hormone receptor. The steroid hormones and their receptors are involved in the regulation of eukaryotic gene expression and affect cellular proliferation and differentiation in target tissues. Ligand-dependent nuclear transactivation involves either direct homodimer binding to a palindromic estrogen response element (ERE) sequence or association with other DNA-binding transcription factors, such as AP-1/c-Jun, c-Fos, ATF-2, Sp1 and Sp3, to mediate ERE-independent signaling. Ligand binding induces a conformational change allowing subsequent or combinatorial association with multiprotein coactivator complexes through LXXLL motifs of their respective components. Mutual transrepression occurs between the estrogen receptor (ER) and NF-kappa-B in a cell-type specific manner. Decreases NF-kappa-B DNA-binding activity and inhibits NF-kappa-B-mediated transcription from the IL6 promoter and displace RELA/p65 and associated coregulators from the promoter. Recruited to the NF-kappa-B response element of the CCL2 and IL8 promoters and can displace CREBBP. Present with NF-kappa-B components RELA/p65 and NFKB1/p50 on ERE sequences. Can also act synergistically with NF-kappa-B to activate transcription involving respective recruitment adjacent response elements; the function involves CREBBP. Can activate the transcriptional activity of TFF1. Also mediates membrane-initiated estrogen signaling involving various kinase cascades. Essential for MTA1-mediated transcriptional regulation of BRCA1 and BCAS3. Maintains neuronal survival in response to ischemic reperfusion injury when in the presence of circulating estradiol (17-beta-estradiol/E2). This Equus caballus (Horse) protein is Estrogen receptor (ESR1).